A 525-amino-acid chain; its full sequence is MKCNNHRILVIDFGSQYTQLLLRRIRELGVYSESCSWNISKSQVYAFNPNGIILSGGPYSVIDNDSPYIPEFVFQLGIPIFGICYGMQIMSFQLGGRVERVIAQREFGCTQVTILSKSVFINDIYDYVDDVTGRFALDVWMSHGDVVTTVPKDFTVIGVNKYRQVAMMANEDRHLYGVQFHPEVTHTKKGKSILERFITCICRCKSSWKIANIIDDIVMDTRVKVGNDKVVLGFSGGIDSLVTALLLRRAIGHQFICIYIDNGLLSNYEFDRIKNFCALNCNLDIIYLSQEQRFFNALIGVNDPEKKRKIIGRVFTEVFEEQIRNLVAVKWLAQGTIYSDVIESGVSLSSFKNVIKSHHNVGGFCGITDIQLLEPIRNLFKDEVRSIGLDLGIPYDIAYRHPFPGPGLAIRILGEVKKEYCDILRRVDFIFIEELKREHLYSKISQAFAVFLPTHSVGIQGDQRKYKWVIALRAVETIDFMTAHWAYLSYDFLNKVSNRIVNEVEEVSRVVYDISSKPPATIEWE.

The Glutamine amidotransferase type-1 domain occupies 7-207 (RILVIDFGSQ…ITCICRCKSS (201 aa)). The active-site Nucleophile is the cysteine 84. Active-site residues include histidine 181 and glutamate 183. Residues 208-400 (WKIANIIDDI…LGIPYDIAYR (193 aa)) form the GMPS ATP-PPase domain. ATP is bound at residue 235–241 (SGGIDSL).

As to quaternary structure, homodimer.

It carries out the reaction XMP + L-glutamine + ATP + H2O = GMP + L-glutamate + AMP + diphosphate + 2 H(+). It participates in purine metabolism; GMP biosynthesis; GMP from XMP (L-Gln route): step 1/1. Functionally, catalyzes the synthesis of GMP from XMP. In Blochmanniella pennsylvanica (strain BPEN), this protein is GMP synthase [glutamine-hydrolyzing].